The chain runs to 197 residues: MAKVQVLNVAVLDNPSPFGNPFQFEITFECMEDLPEDLEWKIIYVGSAESEEYDQILDSVLVGPVPAGRHMFVFQADAPNTGLIPESDAVGVTVVLITCTYRGQEFIRIGYYVNNEYTDPELRENPPVKPDYTQLQRNILASNPRVTRFHINWEATMDKMEDSENVDPAPNAMLPPTCMPGKAPPLGLMPDNSMDCL.

The protein belongs to the ASF1 family. In terms of assembly, interacts with histone H3 and histone H4.

It localises to the nucleus. Histone chaperone that facilitates histone deposition and histone exchange and removal during nucleosome assembly and disassembly. The sequence is that of Histone chaperone asf1b-B (asf1bb) from Danio rerio (Zebrafish).